A 404-amino-acid polypeptide reads, in one-letter code: cAMP-dependent protein kinase regulatory subunit (404 aa).

The tract at residues 14-144 is dimerization and phosphorylation; that stretch reads LTDHELLRIP…RLKTAIAGNF (131 aa). Ser-105 bears the Phosphoserine mark. Residues 145 to 276, Glu-223, Arg-232, 277 to 398, Glu-344, and Arg-353 contribute to the 3',5'-cyclic AMP site; these read LFSH…EKFP and CCRH…GVEE.

This sequence belongs to the cAMP-dependent kinase regulatory chain family. In terms of assembly, tetramer, composed of 2 regulatory (R) and 2 catalytic (C) subunits. In the presence of cAMP it dissociates into 2 active monomeric C subunits and an R dimer.

Its function is as follows. cAMP-dependent protein kinase PKA regulatory subunit. This Colletotrichum trifolii protein is cAMP-dependent protein kinase regulatory subunit (PKAR).